A 201-amino-acid chain; its full sequence is dCTP deaminase, dUMP-forming (201 aa).

Residues 117–122, aspartate 135, 143–145, glutamine 163, tyrosine 177, and glutamine 188 contribute to the dCTP site; these read RSSFGR and TLE. Residue glutamate 145 is the Proton donor/acceptor of the active site.

It belongs to the dCTP deaminase family. In terms of assembly, homotrimer.

It catalyses the reaction dCTP + 2 H2O = dUMP + NH4(+) + diphosphate. It functions in the pathway pyrimidine metabolism; dUMP biosynthesis; dUMP from dCTP: step 1/1. Bifunctional enzyme that catalyzes both the deamination of dCTP to dUTP and the hydrolysis of dUTP to dUMP without releasing the toxic dUTP intermediate. In Methanococcus aeolicus (strain ATCC BAA-1280 / DSM 17508 / OCM 812 / Nankai-3), this protein is dCTP deaminase, dUMP-forming.